The primary structure comprises 122 residues: Large ribosomal subunit protein uL14 (122 aa).

The protein belongs to the universal ribosomal protein uL14 family. As to quaternary structure, part of the 50S ribosomal subunit. Forms a cluster with proteins L3 and L19. In the 70S ribosome, L14 and L19 interact and together make contacts with the 16S rRNA in bridges B5 and B8.

Functionally, binds to 23S rRNA. Forms part of two intersubunit bridges in the 70S ribosome. In Bacillus subtilis (strain 168), this protein is Large ribosomal subunit protein uL14.